The sequence spans 185 residues: Probable gluconokinase (185 aa).

11-18 (GVSGSGKS) is a binding site for ATP.

It belongs to the gluconokinase GntK/GntV family.

The catalysed reaction is D-gluconate + ATP = 6-phospho-D-gluconate + ADP + H(+). It functions in the pathway carbohydrate acid metabolism; D-gluconate degradation. This Rattus norvegicus (Rat) protein is Probable gluconokinase (Idnk).